The primary structure comprises 446 residues: Exodeoxyribonuclease 7 large subunit (446 aa).

The protein belongs to the XseA family. In terms of assembly, heterooligomer composed of large and small subunits.

Its subcellular location is the cytoplasm. It catalyses the reaction Exonucleolytic cleavage in either 5'- to 3'- or 3'- to 5'-direction to yield nucleoside 5'-phosphates.. Its function is as follows. Bidirectionally degrades single-stranded DNA into large acid-insoluble oligonucleotides, which are then degraded further into small acid-soluble oligonucleotides. This chain is Exodeoxyribonuclease 7 large subunit, found in Staphylococcus carnosus (strain TM300).